The primary structure comprises 437 residues: 3-phosphoshikimate 1-carboxyvinyltransferase (437 aa).

Lys-28, Ser-29, and Arg-33 together coordinate 3-phosphoshikimate. Position 28 (Lys-28) interacts with phosphoenolpyruvate. Gly-97 and Arg-125 together coordinate phosphoenolpyruvate. 3-phosphoshikimate-binding residues include Ser-168, Ser-169, Gln-170, Glu-316, and His-343. Position 170 (Gln-170) interacts with phosphoenolpyruvate. Catalysis depends on Glu-316, which acts as the Proton acceptor. 3 residues coordinate phosphoenolpyruvate: Arg-347, Arg-388, and Lys-413.

The protein belongs to the EPSP synthase family. As to quaternary structure, monomer.

Its subcellular location is the cytoplasm. The catalysed reaction is 3-phosphoshikimate + phosphoenolpyruvate = 5-O-(1-carboxyvinyl)-3-phosphoshikimate + phosphate. Its pathway is metabolic intermediate biosynthesis; chorismate biosynthesis; chorismate from D-erythrose 4-phosphate and phosphoenolpyruvate: step 6/7. In terms of biological role, catalyzes the transfer of the enolpyruvyl moiety of phosphoenolpyruvate (PEP) to the 5-hydroxyl of shikimate-3-phosphate (S3P) to produce enolpyruvyl shikimate-3-phosphate and inorganic phosphate. In Rhodococcus erythropolis (strain PR4 / NBRC 100887), this protein is 3-phosphoshikimate 1-carboxyvinyltransferase.